Reading from the N-terminus, the 348-residue chain is Dihydroorotase (348 aa).

2 residues coordinate Zn(2+): His17 and His19. Substrate-binding positions include 19-21 and Asn45; that span reads HLR. Zn(2+) contacts are provided by Lys103, His140, and His178. Lys103 carries the N6-carboxylysine modification. His140 lines the substrate pocket. Position 223 (Leu223) interacts with substrate. Asp251 provides a ligand contact to Zn(2+). Asp251 is a catalytic residue. The substrate site is built by His255 and Ala267.

This sequence belongs to the metallo-dependent hydrolases superfamily. DHOase family. Class II DHOase subfamily. In terms of assembly, homodimer. Zn(2+) serves as cofactor.

The enzyme catalyses (S)-dihydroorotate + H2O = N-carbamoyl-L-aspartate + H(+). It functions in the pathway pyrimidine metabolism; UMP biosynthesis via de novo pathway; (S)-dihydroorotate from bicarbonate: step 3/3. Its function is as follows. Catalyzes the reversible cyclization of carbamoyl aspartate to dihydroorotate. This chain is Dihydroorotase, found in Shigella dysenteriae serotype 1 (strain Sd197).